Reading from the N-terminus, the 285-residue chain is S-methyl-5'-thioadenosine phosphorylase (285 aa).

Phosphate-binding positions include serine 10, arginine 52–histidine 53, and threonine 85–alanine 86. Methionine 188 lines the substrate pocket. Residue threonine 189 participates in phosphate binding. Residue aspartate 212–aspartate 214 participates in substrate binding.

This sequence belongs to the PNP/MTAP phosphorylase family. MTAP subfamily. As to quaternary structure, homotrimer.

The protein resides in the cytoplasm. The protein localises to the nucleus. It catalyses the reaction S-methyl-5'-thioadenosine + phosphate = 5-(methylsulfanyl)-alpha-D-ribose 1-phosphate + adenine. It participates in amino-acid biosynthesis; L-methionine biosynthesis via salvage pathway; S-methyl-5-thio-alpha-D-ribose 1-phosphate from S-methyl-5'-thioadenosine (phosphorylase route): step 1/1. In terms of biological role, catalyzes the reversible phosphorylation of S-methyl-5'-thioadenosine (MTA) to adenine and 5-methylthioribose-1-phosphate. Involved in the breakdown of MTA, a major by-product of polyamine biosynthesis. Responsible for the first step in the methionine salvage pathway after MTA has been generated from S-adenosylmethionine. Has broad substrate specificity with 6-aminopurine nucleosides as preferred substrates. The polypeptide is S-methyl-5'-thioadenosine phosphorylase (Caenorhabditis briggsae).